A 122-amino-acid polypeptide reads, in one-letter code: Large ribosomal subunit protein uL14 (122 aa).

Belongs to the universal ribosomal protein uL14 family. As to quaternary structure, part of the 50S ribosomal subunit. Forms a cluster with proteins L3 and L19. In the 70S ribosome, L14 and L19 interact and together make contacts with the 16S rRNA in bridges B5 and B8.

Its function is as follows. Binds to 23S rRNA. Forms part of two intersubunit bridges in the 70S ribosome. This is Large ribosomal subunit protein uL14 from Picosynechococcus sp. (strain ATCC 27264 / PCC 7002 / PR-6) (Agmenellum quadruplicatum).